A 291-amino-acid polypeptide reads, in one-letter code: 33 kDa chaperonin (291 aa).

2 disulfide bridges follow: C237-C239 and C270-C273.

Belongs to the HSP33 family. Post-translationally, under oxidizing conditions two disulfide bonds are formed involving the reactive cysteines. Under reducing conditions zinc is bound to the reactive cysteines and the protein is inactive.

The protein localises to the cytoplasm. Redox regulated molecular chaperone. Protects both thermally unfolding and oxidatively damaged proteins from irreversible aggregation. Plays an important role in the bacterial defense system toward oxidative stress. This chain is 33 kDa chaperonin, found in Bacillus cereus (strain G9842).